Here is a 134-residue protein sequence, read N- to C-terminus: MGRVVQTTGKRKTAIARAVIREGEGRVRVNKRPVNIIEPEMARMKIMEPLIIAGEDIVSQVDIDVKVQGGGWMSQAEAARIAIARGLVEWTGDPDLRDAYMAYDRHMLKGDPRRKEPKKFGGRGARARRQKSYR.

The disordered stretch occupies residues 109 to 134 (KGDPRRKEPKKFGGRGARARRQKSYR). Residues 115-134 (KEPKKFGGRGARARRQKSYR) are compositionally biased toward basic residues.

This sequence belongs to the universal ribosomal protein uS9 family.

In Methanopyrus kandleri (strain AV19 / DSM 6324 / JCM 9639 / NBRC 100938), this protein is Small ribosomal subunit protein uS9.